The following is a 290-amino-acid chain: 4-diphosphocytidyl-2-C-methyl-D-erythritol kinase (290 aa).

Residue K14 is part of the active site. ATP is bound at residue 103-113 (PMGGGLGGGSS). The active site involves D145.

The protein belongs to the GHMP kinase family. IspE subfamily. Homodimer.

The catalysed reaction is 4-CDP-2-C-methyl-D-erythritol + ATP = 4-CDP-2-C-methyl-D-erythritol 2-phosphate + ADP + H(+). Its pathway is isoprenoid biosynthesis; isopentenyl diphosphate biosynthesis via DXP pathway; isopentenyl diphosphate from 1-deoxy-D-xylulose 5-phosphate: step 3/6. In terms of biological role, catalyzes the phosphorylation of the position 2 hydroxy group of 4-diphosphocytidyl-2C-methyl-D-erythritol. This Pectobacterium atrosepticum (strain SCRI 1043 / ATCC BAA-672) (Erwinia carotovora subsp. atroseptica) protein is 4-diphosphocytidyl-2-C-methyl-D-erythritol kinase.